A 37-amino-acid polypeptide reads, in one-letter code: Large ribosomal subunit protein bL36 (37 aa).

The protein belongs to the bacterial ribosomal protein bL36 family.

The chain is Large ribosomal subunit protein bL36 from Pelotomaculum thermopropionicum (strain DSM 13744 / JCM 10971 / SI).